Reading from the N-terminus, the 424-residue chain is Ankyrin repeat domain-containing protein 61 (424 aa).

ANK repeat units follow at residues 80 to 109 (LSFL…DPEA), 113 to 169 (QGFT…ARVD), 172 to 201 (HRHC…QVNA), 205 to 234 (SSMT…SVNC), 239 to 278 (TGNT…QVNA), 282 to 311 (DGQA…NVNI), and 315 to 348 (NGES…PLRL).

This Bos taurus (Bovine) protein is Ankyrin repeat domain-containing protein 61 (ANKRD61).